The primary structure comprises 246 residues: tRNA (guanine-N(1)-)-methyltransferase (246 aa).

Residues G113 and 132–137 (LGDFVV) contribute to the S-adenosyl-L-methionine site.

It belongs to the RNA methyltransferase TrmD family. In terms of assembly, homodimer.

Its subcellular location is the cytoplasm. The enzyme catalyses guanosine(37) in tRNA + S-adenosyl-L-methionine = N(1)-methylguanosine(37) in tRNA + S-adenosyl-L-homocysteine + H(+). Functionally, specifically methylates guanosine-37 in various tRNAs. The protein is tRNA (guanine-N(1)-)-methyltransferase of Latilactobacillus sakei subsp. sakei (strain 23K) (Lactobacillus sakei subsp. sakei).